Consider the following 424-residue polypeptide: MEKFRVHGPFTLSGTVDISGAKNAALPILFAAILAEEPVILTNVPNLKDVETTVKILRKLGVVVERAENNAVHIDASKIDHYVAPYELVKTMRASIWALAPLVARFHQGQVSLPGGCTIGARPVDMHIAGLEKMGATITLDEGYVKAEVNGRLTGARILMDKVSVGATLSVMMAATLAKGTTTIENAAREPEIVDTAIFLNKMGAKITGAGTDTITIEGVERLGGCEHHIVPDRIETGTFLVAAAISGGRITCRGTKADTLDAVIEKLREAGMQVDVTENSITLDSLGMRPKAVNIRTMPHPGFPTDMQAQFTLLNVVANGTSKITETIFENRFMHIPELIRMGAKAEIEGNTAICHGVENLSGAEVMATDLRASISLVLAGCIANGQTIVDRIYHIDRGYEHIEDKLQKLGARIERFNAPFEE.

22-23 (KN) contacts phosphoenolpyruvate. Arg93 lines the UDP-N-acetyl-alpha-D-glucosamine pocket. Cys117 (proton donor) is an active-site residue. Cys117 is modified (2-(S-cysteinyl)pyruvic acid O-phosphothioketal). Residues 162–165 (KVSV), Asp307, and Ile329 contribute to the UDP-N-acetyl-alpha-D-glucosamine site.

This sequence belongs to the EPSP synthase family. MurA subfamily.

Its subcellular location is the cytoplasm. It carries out the reaction phosphoenolpyruvate + UDP-N-acetyl-alpha-D-glucosamine = UDP-N-acetyl-3-O-(1-carboxyvinyl)-alpha-D-glucosamine + phosphate. It participates in cell wall biogenesis; peptidoglycan biosynthesis. Functionally, cell wall formation. Adds enolpyruvyl to UDP-N-acetylglucosamine. This is UDP-N-acetylglucosamine 1-carboxyvinyltransferase from Glaesserella parasuis serovar 5 (strain SH0165) (Haemophilus parasuis).